The sequence spans 362 residues: Stress response regulator protein 1 (362 aa).

Disordered stretches follow at residues methionine 1–glutamine 39 and threonine 163–threonine 188. Residues proline 19–glutamine 39 are compositionally biased toward low complexity. The Response regulatory domain maps to lysine 209–glutamate 327. The residue at position 260 (aspartate 260) is a 4-aspartylphosphate.

Its function is as follows. Required for stress adaptation, morphogenesis and virulence. This chain is Stress response regulator protein 1 (SRR1), found in Lodderomyces elongisporus (strain ATCC 11503 / CBS 2605 / JCM 1781 / NBRC 1676 / NRRL YB-4239) (Yeast).